The chain runs to 170 residues: Adenine phosphoribosyltransferase (170 aa).

This sequence belongs to the purine/pyrimidine phosphoribosyltransferase family. In terms of assembly, homodimer.

The protein localises to the cytoplasm. It catalyses the reaction AMP + diphosphate = 5-phospho-alpha-D-ribose 1-diphosphate + adenine. Its pathway is purine metabolism; AMP biosynthesis via salvage pathway; AMP from adenine: step 1/1. In terms of biological role, catalyzes a salvage reaction resulting in the formation of AMP, that is energically less costly than de novo synthesis. The polypeptide is Adenine phosphoribosyltransferase (Alkaliphilus metalliredigens (strain QYMF)).